A 727-amino-acid chain; its full sequence is 1,4-alpha-glucan branching enzyme GlgB (727 aa).

Catalysis depends on aspartate 405, which acts as the Nucleophile. The Proton donor role is filled by glutamate 458.

The protein belongs to the glycosyl hydrolase 13 family. GlgB subfamily. In terms of assembly, monomer.

The catalysed reaction is Transfers a segment of a (1-&gt;4)-alpha-D-glucan chain to a primary hydroxy group in a similar glucan chain.. It functions in the pathway glycan biosynthesis; glycogen biosynthesis. Functionally, catalyzes the formation of the alpha-1,6-glucosidic linkages in glycogen by scission of a 1,4-alpha-linked oligosaccharide from growing alpha-1,4-glucan chains and the subsequent attachment of the oligosaccharide to the alpha-1,6 position. The protein is 1,4-alpha-glucan branching enzyme GlgB of Yersinia enterocolitica serotype O:8 / biotype 1B (strain NCTC 13174 / 8081).